We begin with the raw amino-acid sequence, 97 residues long: Late embryogenesis abundant protein Lea5 (97 aa).

It belongs to the LEA type 3 family.

The chain is Late embryogenesis abundant protein Lea5 (LEA5) from Citrus sinensis (Sweet orange).